Here is a 387-residue protein sequence, read N- to C-terminus: (S)-8-oxocitronellyl enol synthase (387 aa).

Residues 36–38, 64–65, 82–83, 106–107, and Gln140 contribute to the NADP(+) site; these read TGI, RR, DI, and SW. Active-site residues include Lys144 and Tyr177. Residues Lys144 and Tyr177 each contribute to the substrate site. NADP(+) is bound by residues Tyr177 and 211–213; that span reads SMM.

The protein belongs to the short-chain dehydrogenases/reductases (SDR) family. Highly divergent. Expressed in leaves.

The enzyme catalyses (S)-8-oxocitronellyl enol + NADP(+) = (6E)-8-oxogeranial + NADPH + H(+). It carries out the reaction (S)-8-oxocitronellyl enol + NAD(+) = (6E)-8-oxogeranial + NADH + H(+). The catalysed reaction is (R)-8-oxocitronellyl enol + NADP(+) = (6E)-8-oxogeranial + NADPH + H(+). Its function is as follows. Iridoid synthase that catalyzes the first step in generation of the iridoid ring scaffold using the linear monoterpene (6E)-8-oxogeranial as substrate. Reduces 8-oxogeranial, generating an unstable product that is subsequently cyclized into several possible products, either non-enzymically or by dedicated cyclases. Iridoids comprise a large family of distinctive bicyclic monoterpenes that possess a wide range of pharmacological activities, including anticancer, anti-inflammatory, antifungal and antibacterial activities. In Antirrhinum majus (Garden snapdragon), this protein is (S)-8-oxocitronellyl enol synthase.